The sequence spans 398 residues: Serine/threonine-protein kinase UL13 (398 aa).

Positions 1–10 (MAAGGGGGGV) are enriched in gly residues. Positions 1-44 (MAAGGGGGGVSRAALARPPIHRGTSAPGGAIAAAGGDGDGDEAS) are disordered. In terms of domain architecture, Protein kinase spans 80-398 (TGDPVAVGAG…GGARFAELAA (319 aa)). Residues 86-94 (VGAGSYGSV) and K103 contribute to the ATP site. The active-site Proton acceptor is D194.

The protein belongs to the protein kinase superfamily. Ser/Thr protein kinase family. Post-translationally, autophosphorylated.

Its subcellular location is the virion tegument. The protein resides in the host nucleus. It localises to the host cytoplasm. The protein localises to the host endoplasmic reticulum. It carries out the reaction L-seryl-[protein] + ATP = O-phospho-L-seryl-[protein] + ADP + H(+). It catalyses the reaction L-threonyl-[protein] + ATP = O-phospho-L-threonyl-[protein] + ADP + H(+). Its function is as follows. Multifunctional serine/threonine kinase that plays a role in several processes including egress of virus particles from the nucleus, modulation of the actin cytoskeleton and regulation of viral and cellular gene expression. Regulates the nuclear localization of viral envelopment factors UL34 and UL31, by phosphorylating the US3 kinase, indicating a role in nuclear egress. Disrupts host nuclear lamins, including LMNA and LMNB1. Phosphorylates the viral Fc receptor composed of glycoproteins E (gE) and I (gI). Phosphorylation of glycoprotein E (gE) by UL13 alters its subcellular localization, from the host early endosome to the plasma membrane. Participates in the transcriptional regulation of cellular and viral mRNAs mainly by phosphorylating the viral transcriptional regulator ICP22. Functions as an antagonist of the host RLR-mediated antiviral responses via suppression of the transcription of cytosolic receptors RIGI and IFIH1. Facilitates immune evasion also by recruiting host RNF5 to initiate the 'Lys-27'-/'Lys-29'-linked polyubiquitination of STING1; leading to its degradation. Blocks host IFN-beta transactivation mediated by the cGAS-STING pathway by phosphorylating host IRF3. In turn, IRF3 binding to the IRF3-responsive promoters and downstream interferon stimulated genes/ISG expression are greatly impaired. Induces the activation of the host DNA damage response via H2AX phosphorylation to improve efficient viral replication and progeny production. The chain is Serine/threonine-protein kinase UL13 (UL13) from Suid herpesvirus 1 (strain NIA-3) (SuHV-1).